We begin with the raw amino-acid sequence, 1335 residues long: MESEMLQSPLMGLGEEDEADLTDWNLPLAFMKKRHCEKIEGSKSLAQSWRMKDRMKTVSVALVLCLNVGVDPPDVVKTTPCARLECWIDPLSMGPQKALETIGANLQKQYENWQPRARYKQSLDPTVDEVKKLCTSLRRNAKEERVLFHYNGHGVPRPTVNGEVWVFNKNYTQYIPLSIYDLQTWMGSPSIFVYDCSNAGLIVKSFKQFALQREQELEVAAINPNHPLAQMPLPPSMKNCIQLAACEAHELLPMIPDLPADLFTSCLTTPIKIALRWFCMQKCVSLVPGVTLDLIEKIPGRLNDRRTPLGELNWIFTAITDTIAWNVLPRDLFQKLFRQDLLVASLFRNFLLAERIMRSYNCTPVSSPRLPPTYMHAMWQAWDLAVDICLSQLPTIIEEGTAFRHSPFFAEQLTAFQVWLTMGVENRSPPEQLPIVLQVLLSQVHRLRALDLLGRFLDLGPWAVSLALSVGIFPYVLKLLQSSARELRPLLVFIWAKILAVDSSCQADLVKDNGHKYFLSVLADPYMPAEHRTMTAFILAVIVNSYTTGQEACLQGNLIAICLEQLSDPHPLLRQWVAICLGRIWQNFDSARWCGVRDSAHEKLYSLLSDPIPEVRCAAVFALGTFVGNSAERTDHSTTIDHNVAMMLAQLINDGSPMVRKELVVALSHLVVQYESNFCTVALQFMEEEKNYPLPSPAATEGGSLTPVRDSPCTPRLRSVSSYGNIRAVTTARNLNKSLQNLSLTEESGSSVAFSPGNLSTSSSASSTLGSPENEEYILSFETIDKMRRVSSYSALNSLIGVSFNSVYTQIWRVLLHLAADPYPDVSDLAMKVLNSIAYKATVNARPQRILDTSSLTQSAPASPTNKGMHMHQVGGSPPASSTSSCSLTNDVAKQTVSRDLPSSRPGTAGPTGAQYTPHSHQFPRTRKMFDKGPDQTTDDADDAAGHKSFICASMQTGFCDWSARYFAQAVMKIPEEHDLESQIRKEREWRFLRNTRVRKQAQQVIQKGITRLDDQIFLNRNPGVPSVVKFHPFTPCIAVADKDSICFWDWEKGEKLDYFHNGNPRYTRVTAMEYLNGQDCSLLLTATDDGAIRVWKNFADLEKNPEMVTAWQGLSDMLPTTRGAGMVVDWEQETGLLMSSGDVRIVRIWDTDRETKVQDIPTGADSCVTSLSCDSHRSLIVAGLGDGSIRVYDRRMALSECRVMTYREHTAWVVKAYLQKHPEGHIVSVSVNGDVRFFDPRMPESVNVMQIVKGLTALDIHPQANLIACGSMNQFTAIYNGNGELINNIKYYDGFMGQRVGAISCLAFHPHWPHLAVGSNDYYISVYSVEKRVR.

Residues S44 and S122 each carry the phosphoserine modification. Position 696 is a phosphoserine; by MAPK8 (S696). O-linked (GlcNAc) threonine glycosylation is present at T700. Phosphothreonine; by MAPK8 is present on T706. Phosphoserine; by RPS6KA1 occurs at positions 719 and 721. Phosphoserine; by AMPK and RPS6KA1 is present on S722. Position 738 is a phosphoserine (S738). The tract at residues G749–S771 is disordered. The span at S755 to S771 shows a compositional bias: low complexity. S791 is subject to Phosphoserine. Phosphoserine; by AMPK is present on S792. Phosphoserine is present on residues S836 and S855. Residues T853–N866 show a composition bias toward polar residues. Positions T853–D942 are disordered. Residue S859 is modified to Phosphoserine; by MTOR. S863 is subject to Phosphoserine; by MAPK8, MTOR and NLK. T865 carries the post-translational modification Phosphothreonine. S877 is modified (phosphoserine). Residues S877–S887 show a composition bias toward low complexity. Polar residues predominate over residues L888–S898. Residues K932 and K948 each participate in a glycyl lysine isopeptide (Lys-Gly) (interchain with G-Cter in ubiquitin) cross-link. S982 carries the post-translational modification Phosphoserine. WD repeat units follow at residues N1020–H1061, P1065–P1106, T1121–D1160, G1164–R1203, E1209–V1249, Q1251–K1291, and Q1299–R1335. Position 1097 is an N6-acetyllysine (K1097).

It belongs to the WD repeat RAPTOR family. As to quaternary structure, part of the mechanistic target of rapamycin complex 1 (mTORC1) which contains MTOR, MLST8 and RPTOR. mTORC1 associates with AKT1S1/PRAS40, which inhibits its activity. mTORC1 associates with DEPTOR, which regulates its activity. mTORC1 binds to and is inhibited by FKBP12-rapamycin. Forms a complex with MTOR under both leucine-rich and -poor conditions. Interacts with (via TOS motifs) EIF4EBP1 and RPS6KB1; interaction is independent of its association with MTOR. Binds preferentially to poorly or non-phosphorylated forms of EIF4EBP1, and this binding is critical to the ability of MTOR to catalyze phosphorylation. Interacts with ULK1 in a nutrient-dependent manner; the interaction is reduced during starvation. Interacts with GTP-bound form of RagA/RRAGA or RagB/RRAGB and GDP-bound form of RagC/RRAGC or RagD/RRAGD, promoting recruitment of mTORC1 to the lysosomes. Interacts (when phosphorylated by AMPK) with 14-3-3 protein, leading to inhibition of its activity. Interacts with SPAG5; SPAG5 competes with MTOR for RPTOR-binding, resulting in decreased mTORC1 formation. Interacts with WAC; WAC positively regulates MTOR activity by promoting the assembly of the TTT complex composed of TELO2, TTI1 and TTI2 and the RUVBL complex composed of RUVBL1 and RUVBL2 into the TTT-RUVBL complex which leads to the dimerization of the mTORC1 complex and its subsequent activation. Interacts with G3BP1. The complex formed with G3BP1 and SPAG5 is increased by oxidative stress. Interacts with HTR6. Interacts with PIH1D1. Interacts with LARP1. Interacts with BRAT1. Interacts with SIK3. Interacts with SLC38A7; this interaction mediates the recruitment of mTORC1 to the lysosome and its subsequent activation. Post-translationally, insulin-stimulated phosphorylation at Ser-863 by MTOR and MAPK8 regulates mTORC1 activity. Phosphorylated at Ser-863 by NLK in response to stress, disrupting the interaction with small GTPases Rag (RagA/RRAGA, RagB/RRAGB, RagC/RRAGC and/or RagD/RRAGD), thereby preventing lysosome recruitment and activation of the mTORC1 complex. Osmotic stress also induces phosphorylation at Ser-696, Thr-706 and Ser-863 by MAPK8. Ser-863 phosphorylation is required for phosphorylation at Ser-855 and Ser-859. In response to nutrient limitation, phosphorylated at Ser-722 and Ser-792 by AMPK; phosphorylation promotes interaction with 14-3-3 proteins, leading to negative regulation of the mTORC1 complex. Phosphorylation at Ser-722 and Ser-792 by AMPK in response to glucose starvation inhibits O-GlcNAcylation by OGT and subsequent activation of mTORC1. In response to growth factors, phosphorylated at Ser-719, Ser-721 and Ser-722 by RPS6KA1, which stimulates mTORC1 activity. Phosphorylation at Ser-791 by PKA downstream of cAMP inhibits the mTORC1 complex. Phosphorylated at Ser-877 by TBK1, leading to negative regulation of the mTORC1 complex. In terms of processing, O-GlcNAcylated by OGT upon glucose sufficiency, promoting interaction with small GTPases Rag (RagA/RRAGA, RagB/RRAGB, RagC/RRAGC and/or RagD/RRAGD) and subsequent recruitment of mTORC1 to lysosomal membranes, leading to activation of the mTORC1 complex. Phosphorylation at Ser-722 and Ser-792 by AMPK in response to glucose starvation inhibits O-GlcNAcylation. Acetylation at Lys-1097 by EP300/p300 in response to leucine metabolite acetyl-coA promotes its activity, leading to activation of the mTORC1 complex. Acetylation is decreased in response to fasting. Phosphorylated at Ser-877 by TBK1, leading to negative regulation of the mTORC1 complex. Post-translationally, ubiquitinated, leading to its degradation by the proteasome. Deubiquitinated by OTUB1 via a non-catalytic mechanism. Ubiquitinated by an E3 ubiquitin ligase complex containing VHL.

It localises to the cytoplasm. Its subcellular location is the lysosome. The protein resides in the cytoplasmic granule. Component of the mechanistic target of rapamycin complex 1 (mTORC1), an evolutionarily conserved central nutrient sensor that stimulates anabolic reactions and macromolecule biosynthesis to promote cellular biomass generation and growth. In response to nutrients, growth factors or amino acids, mTORC1 is recruited to the lysosome membrane and promotes protein, lipid and nucleotide synthesis by phosphorylating several substrates, such as ribosomal protein S6 kinase (RPS6KB1 and RPS6KB2) and EIF4EBP1 (4E-BP1). In the same time, it inhibits catabolic pathways by phosphorylating the autophagy initiation components ULK1 and ATG13, as well as transcription factor TFEB, a master regulators of lysosomal biogenesis and autophagy. The mTORC1 complex is inhibited in response to starvation and amino acid depletion. Within the mTORC1 complex, RPTOR acts both as a molecular adapter, which (1) mediates recruitment of mTORC1 to lysosomal membranes via interaction with small GTPases Rag (RagA/RRAGA, RagB/RRAGB, RagC/RRAGC and/or RagD/RRAGD), and a (2) substrate-specific adapter, which promotes substrate specificity by binding to TOS motif-containing proteins and direct them towards the active site of the MTOR kinase domain for phosphorylation. mTORC1 complex regulates many cellular processes, such as odontoblast and osteoclast differentiation or neuronal transmission. mTORC1 complex in excitatory neuronal transmission is required for the prosocial behavior induced by the psychoactive substance lysergic acid diethylamide (LSD). The chain is Regulatory-associated protein of mTOR from Mus musculus (Mouse).